The chain runs to 321 residues: uncharacterized protein (321 aa).

Helical transmembrane passes span 12 to 32 (IGVE…WAAT), 52 to 72 (LITS…AFLV), 86 to 106 (ILMS…ILII), 109 to 129 (LTGL…QQWF), 136 to 156 (FVIS…LVLA), 168 to 188 (DSLS…LFVG), 214 to 234 (WGMI…FTFL), 254 to 274 (KEIP…GLFF), and 292 to 312 (IFIC…QIFA).

Its subcellular location is the cell membrane. This is an uncharacterized protein from Campylobacter jejuni subsp. jejuni serotype O:2 (strain ATCC 700819 / NCTC 11168).